Here is a 294-residue protein sequence, read N- to C-terminus: Cuticle collagen 144 (294 aa).

The signal sequence occupies residues 1-30; it reads MEKILVTISTGAASFAVLAVLFTIPSLYNT. A compositionally biased stretch (pro residues) spans 100-112; that stretch reads TCPPGPPGPPGQP. 2 disordered regions span residues 100 to 134 and 148 to 278; these read TCPP…TYAP and PQGP…GNDA. Triple-helical region regions lie at residues 102-127 and 153-274; these read PPGP…KGED and GPEG…PGLP. Low complexity-rich tracts occupy residues 164-209 and 219-265; these read AGPD…PGQD and APGA…DGQP.

In terms of assembly, collagen polypeptide chains are complexed within the cuticle by disulfide bonds and other types of covalent cross-links.

In terms of biological role, nematode cuticles are composed largely of collagen-like proteins. The cuticle functions both as an exoskeleton and as a barrier to protect the worm from its environment. The sequence is that of Cuticle collagen 144 from Caenorhabditis briggsae.